A 169-amino-acid polypeptide reads, in one-letter code: Anaerobic nitrite reductase NSHB3 (169 aa).

One can recognise a Globin domain in the interval 15–165 (RFTEEQEALV…LVAAIKQGMK (151 aa)). Residues 48–52 (EVAPS) carry the Homodimerization motif. Heme b is bound by residues Ser58, Lys72, His76, Arg106, Thr110, and His111. A Homodimerization motif is present at residues 118–130 (DAHFEVAKFALLE).

This sequence belongs to the plant globin family. In terms of assembly, homodimer. Requires heme b as cofactor.

Its subcellular location is the cytoplasm. It is found in the nucleus. It carries out the reaction Fe(III)-heme b-[protein] + nitric oxide + H2O = Fe(II)-heme b-[protein] + nitrite + 2 H(+). Its function is as follows. Phytoglobin that reduces nitrite to nitric oxide under anoxic conditions (e.g. during flooding or in waterlogged soil). May not function as an oxygen storage or transport protein. Has an unusually high affinity for O(2) through an hexacoordinate heme iron because of a very low dissociation constant. The protein is Anaerobic nitrite reductase NSHB3 of Oryza sativa subsp. indica (Rice).